We begin with the raw amino-acid sequence, 531 residues long: Zinc finger C2HC domain-containing protein 1C (531 aa).

The segment at methionine 16–leucine 45 is disordered. Positions tyrosine 35 to serine 44 are enriched in low complexity. The stretch at valine 209–isoleucine 264 forms a coiled coil. 2 disordered regions span residues phenylalanine 290–aspartate 318 and asparagine 334–glycine 387. Residues glutamate 293–glutamate 305 show a composition bias toward basic and acidic residues. The segment covering arginine 306–glutamine 315 has biased composition (polar residues). The span at lysine 335–methionine 345 shows a compositional bias: basic and acidic residues. Positions serine 366–serine 380 are enriched in low complexity. C2HC/C3H-type zinc fingers lie at residues glutamine 385–serine 414 and aspartate 493–arginine 522. 8 residues coordinate Zn(2+): cysteine 389, cysteine 392, histidine 404, cysteine 408, cysteine 497, cysteine 500, histidine 512, and cysteine 516.

This sequence belongs to the ZC2HC1 family. Zn(2+) is required as a cofactor.

This chain is Zinc finger C2HC domain-containing protein 1C (ZC2HC1C), found in Macaca fascicularis (Crab-eating macaque).